The chain runs to 115 residues: Large ribosomal subunit protein bL19 (115 aa).

Belongs to the bacterial ribosomal protein bL19 family.

In terms of biological role, this protein is located at the 30S-50S ribosomal subunit interface and may play a role in the structure and function of the aminoacyl-tRNA binding site. The sequence is that of Large ribosomal subunit protein bL19 from Wigglesworthia glossinidia brevipalpis.